The following is a 527-amino-acid chain: Oviduct-specific glycoprotein (527 aa).

Residues 1-21 (MGKLLLWVGLVLVLKHHNGAA) form the signal peptide. The GH18 domain occupies 22–385 (HKLVCYFANW…YMLNDLLLKA (364 aa)). An intrachain disulfide couples Cys-26 to Cys-51. Asn-62 carries N-linked (GlcNAc...) asparagine glycosylation. Residues 71–72 (AR), 98–101 (GGWN), Tyr-142, 211–214 (LSYD), and Trp-355 each bind chitin. Residues Asn-402 and Asn-441 are each glycosylated (N-linked (GlcNAc...) asparagine). Positions 433–527 (TETHGRSDNM…MTLPSGKRSD (95 aa)) are disordered.

Belongs to the glycosyl hydrolase 18 family. Oviduct.

The protein localises to the cytoplasmic vesicle. It is found in the secretory vesicle. Its function is as follows. Binds to oocyte zona pellucida in vivo. May play a role in the fertilization process and/or early embryonic development. This chain is Oviduct-specific glycoprotein (OVGP1), found in Sus scrofa (Pig).